Reading from the N-terminus, the 148-residue chain is Small ribosomal subunit protein uS9 (148 aa).

This sequence belongs to the universal ribosomal protein uS9 family.

This chain is Small ribosomal subunit protein uS9 (RpS16), found in Drosophila melanogaster (Fruit fly).